The primary structure comprises 490 residues: MSNVVLIVYDPRMISKYLGQKLHMGLVADDIIKPTAEIAQQIFANFVRLVLNVSESSLTTLPLSANCDYDPELHKKSIPIIILFQCMKAFIKDNSGNKLDLTMCDLVTPAKHEHRFRKLTSFLVDFLKLHELATPAFNEISEEFSDRKFEMEKIREELLEAEKKKNDLLAKQSIRKRHEHELINEQSNAKAELKNVVNEYTETRQINEELDKQKEEAILHIQALEKEMLTGKKTIEHLNEEVLTSPEQLKQEMEERKRHIEELRDCLESSKKGLQAKLEAREICINSEKNVPVIIEKIHQWTEVREVIIDLIDVESENLRKLKEMEEQLDFMMKEMETAQKRLVEQSETHEQLRIEHTQKSEERQRRIEEITEQIANLKTSQPDVSQEIAKKKQELLALKNAHSETISQITNSCQDAVAKFAKLNAMFKETQKVAFEKNTAAAREMERLKSSLTGRLLSDYTFGSSTIDAGENTENCDPQPNDSSFSVFK.

Coiled-coil stretches lie at residues 146 to 280 and 310 to 407; these read DRKF…KLEA and DLID…SETI. Disordered stretches follow at residues 346–365 and 468–490; these read QSETHEQLRIEHTQKSEERQ and IDAGENTENCDPQPNDSSFSVFK.

Belongs to the NUF2 family. As to quaternary structure, component of the NDC80 complex, which is composed of at least ndc-80 and him-10. The NDC80 complex interacts with knl-1.

It is found in the nucleus. Its subcellular location is the chromosome. The protein resides in the centromere. The protein localises to the kinetochore. Its function is as follows. Acts as a component of the essential kinetochore-associated NDC80 complex, which is required for chromosome segregation in mitosis and meiosis and spindle checkpoint activity. The ndc-80 complex synergistically enhances the affinity of the ska-1 complex for microtubules and may allow the ndc-80 complex to track depolymerizing microtubules. The protein is Kinetochore protein Nuf2 homolog (him-10) of Caenorhabditis elegans.